The chain runs to 397 residues: Elongation factor Tu (397 aa).

The region spanning 10–207 (KPHVNIGTIG…ACDSYIPEPQ (198 aa)) is the tr-type G domain. Residues 19-26 (GHIDHGKT) are G1. GTP is bound at residue 19-26 (GHIDHGKT). Mg(2+) is bound at residue T26. Residues 60 to 64 (GITIA) form a G2 region. The tract at residues 81 to 84 (DCPG) is G3. Residues 81–85 (DCPGH) and 136–139 (NKCD) each bind GTP. Residues 136 to 139 (NKCD) form a G4 region. The G5 stretch occupies residues 174–176 (SAL).

It belongs to the TRAFAC class translation factor GTPase superfamily. Classic translation factor GTPase family. EF-Tu/EF-1A subfamily. Monomer.

It localises to the cytoplasm. The enzyme catalyses GTP + H2O = GDP + phosphate + H(+). GTP hydrolase that promotes the GTP-dependent binding of aminoacyl-tRNA to the A-site of ribosomes during protein biosynthesis. The polypeptide is Elongation factor Tu (Nitratidesulfovibrio vulgaris (strain ATCC 29579 / DSM 644 / CCUG 34227 / NCIMB 8303 / VKM B-1760 / Hildenborough) (Desulfovibrio vulgaris)).